Reading from the N-terminus, the 131-residue chain is MVTLFTSPSCTSCRKAKAWLQEHDIPYTERNIFSEHLTIDEIKQILKMTEDGTDEIISTRSKTYQKLNVDIDSLPLQDLYAIIQDNPGLLRRPIILDEKRLQVGYNEDEIRRFLPRKVRTFQLQEAQRLVD.

C10 and C13 are oxidised to a cystine.

This sequence belongs to the ArsC family. Spx subfamily. As to quaternary structure, interacts with the C-terminal domain of the alpha subunit of the RNAP.

Its subcellular location is the cytoplasm. Functionally, global transcriptional regulator that plays a key role in stress response and exerts either positive or negative regulation of genes. Acts by interacting with the C-terminal domain of the alpha subunit of the RNA polymerase (RNAP). This interaction can enhance binding of RNAP to the promoter region of target genes and stimulate their transcription, or block interaction of RNAP with activator. The protein is Global transcriptional regulator Spx of Staphylococcus haemolyticus (strain JCSC1435).